A 400-amino-acid chain; its full sequence is Probable peptidoglycan glycosyltransferase FtsW (400 aa).

Residues M1–Q29 lie on the Cytoplasmic side of the membrane. A helical membrane pass occupies residues L30 to F50. Topologically, residues P51–P60 are periplasmic. A helical transmembrane segment spans residues F61–V81. Residues L82–H95 are Cytoplasmic-facing. A helical transmembrane segment spans residues L96 to G116. Topologically, residues A117–P122 are periplasmic. Residues L123–A143 form a helical membrane-spanning segment. The Cytoplasmic segment spans residues G144–D155. A helical membrane pass occupies residues S156–M176. The Periplasmic segment spans residues Q177–P178. A helical transmembrane segment spans residues D179–A199. Position 200 (K200) is a topological domain, cytoplasmic. The helical transmembrane segment at L201–A221 threads the bilayer. At E222 to G290 the chain is on the periplasmic side. Residues F291–I311 form a helical membrane-spanning segment. Residues G312–R321 lie on the Cytoplasmic side of the membrane. The chain crosses the membrane as a helical span at residues F322 to V342. The Periplasmic portion of the chain corresponds to G343–L356. A helical transmembrane segment spans residues P357–I377. At R378–K400 the chain is on the cytoplasmic side.

Belongs to the SEDS family. FtsW subfamily.

It localises to the cell inner membrane. It carries out the reaction [GlcNAc-(1-&gt;4)-Mur2Ac(oyl-L-Ala-gamma-D-Glu-L-Lys-D-Ala-D-Ala)](n)-di-trans,octa-cis-undecaprenyl diphosphate + beta-D-GlcNAc-(1-&gt;4)-Mur2Ac(oyl-L-Ala-gamma-D-Glu-L-Lys-D-Ala-D-Ala)-di-trans,octa-cis-undecaprenyl diphosphate = [GlcNAc-(1-&gt;4)-Mur2Ac(oyl-L-Ala-gamma-D-Glu-L-Lys-D-Ala-D-Ala)](n+1)-di-trans,octa-cis-undecaprenyl diphosphate + di-trans,octa-cis-undecaprenyl diphosphate + H(+). It participates in cell wall biogenesis; peptidoglycan biosynthesis. Peptidoglycan polymerase that is essential for cell division. The sequence is that of Probable peptidoglycan glycosyltransferase FtsW from Aliivibrio salmonicida (strain LFI1238) (Vibrio salmonicida (strain LFI1238)).